Consider the following 244-residue polypeptide: Small ribosomal subunit protein uS3 (244 aa).

Positions valine 39 to arginine 107 constitute a KH type-2 domain. The segment at valine 213 to arginine 244 is disordered. Positions glutamate 216–arginine 244 are enriched in basic and acidic residues.

It belongs to the universal ribosomal protein uS3 family. Part of the 30S ribosomal subunit. Forms a tight complex with proteins S10 and S14.

In terms of biological role, binds the lower part of the 30S subunit head. Binds mRNA in the 70S ribosome, positioning it for translation. This is Small ribosomal subunit protein uS3 from Xanthomonas axonopodis pv. citri (strain 306).